A 1883-amino-acid chain; its full sequence is Zinc finger protein 106 (1883 aa).

Glycyl lysine isopeptide (Lys-Gly) (interchain with G-Cter in SUMO2) cross-links involve residues Ile6 and Lys37. A C2H2-type 1; atypical zinc finger spans residues 20 to 44 (HECRVCGVTEVGLSAYAKHISGQLH). Positions 39-162 (ISGQLHKDNV…NGGGPRGRSG (124 aa)) are disordered. Acidic residues predominate over residues 52-67 (EREDDGKGEEEEEDYF). Residues Lys69 and Lys76 each participate in a glycyl lysine isopeptide (Lys-Gly) (interchain with G-Cter in SUMO2) cross-link. Basic and acidic residues-rich tracts occupy residues 77–86 (QRKEQSRQDE), 96–116 (SDDR…DRES), and 128–138 (PQRDWKWEKDG). Residue Lys133 forms a Glycyl lysine isopeptide (Lys-Gly) (interchain with G-Cter in SUMO2) linkage. Residues 139-148 (FNNTRKNSFP) show a composition bias toward polar residues. Residues Lys243, Lys287, and Lys305 each participate in a glycyl lysine isopeptide (Lys-Gly) (interchain with G-Cter in SUMO2) cross-link. Over residues 322–338 (QTTKQADTATSKVSGKN) the composition is skewed to polar residues. Positions 322-356 (QTTKQADTATSKVSGKNGSAAREKPRRWTPYPSQK) are disordered. Residues Lys356, Lys365, Lys371, and Lys417 each participate in a glycyl lysine isopeptide (Lys-Gly) (interchain with G-Cter in SUMO2) cross-link. The tract at residues 389 to 423 (IQEPQTDETRNSPTQKTQKEIHTGSLNHKASSDSA) is disordered. A compositionally biased stretch (polar residues) spans 412 to 423 (GSLNHKASSDSA). Phosphoserine is present on Ser422. Residues Lys451, Lys461, Lys477, Lys492, Lys505, Lys515, Lys525, Lys539, and Lys557 each participate in a glycyl lysine isopeptide (Lys-Gly) (interchain with G-Cter in SUMO2) cross-link. The disordered stretch occupies residues 457–501 (CPATKSLSQKQDPKNISKNTKTNFFSPGEHSNPSNKPTVEDNHGP). Residues 461–493 (KSLSQKQDPKNISKNTKTNFFSPGEHSNPSNKP) are compositionally biased toward polar residues. A disordered region spans residues 586 to 637 (LEDESDGETSDTEKHGTKIGTLGSATTELLSGSTRTADEKEEDDRILKTSRE). Phosphoserine is present on Ser590. Lys603 is covalently cross-linked (Glycyl lysine isopeptide (Lys-Gly) (interchain with G-Cter in SUMO2)). Over residues 608–620 (GSATTELLSGSTR) the composition is skewed to polar residues. 2 positions are modified to phosphoserine: Ser641 and Ser661. Glycyl lysine isopeptide (Lys-Gly) (interchain with G-Cter in SUMO2) cross-links involve residues Lys671, Lys684, Lys705, Lys721, Lys741, Lys775, and Lys807. 4 positions are modified to phosphoserine: Ser859, Ser861, Ser864, and Ser893. The disordered stretch occupies residues 879–945 (EEGTGKENEP…HSAQLSSDHI (67 aa)). The segment covering 888-906 (PQQMVSPSNSLRAGQSQKA) has biased composition (polar residues). Residues Lys905 and Lys911 each participate in a glycyl lysine isopeptide (Lys-Gly) (interchain with G-Cter in SUMO2) cross-link. Ser937 carries the phosphoserine modification. Residue Lys953 forms a Glycyl lysine isopeptide (Lys-Gly) (interchain with G-Cter in SUMO2) linkage. Residues 958–976 (QERSIPPSENQNSQESNGE) show a composition bias toward polar residues. Disordered regions lie at residues 958–982 (QERS…CLSS), 997–1048 (ATDS…KERS), 1121–1140 (EPSE…RRNS), and 1182–1218 (PTFQ…VPPS). Thr1021 carries the phosphothreonine modification. Phosphoserine occurs at positions 1025, 1026, and 1031. A compositionally biased stretch (basic residues) spans 1035-1045 (KNKRRKIKGKK). The residue at position 1249 (Ser1249) is a Phosphoserine. A disordered region spans residues 1252–1483 (ESTESFHEPS…EVSSTSEIGT (232 aa)). Positions 1255–1277 (ESFHEPSQELKFSVEQRNTRNRE) are enriched in basic and acidic residues. Lys1265 is covalently cross-linked (Glycyl lysine isopeptide (Lys-Gly) (interchain with G-Cter in SUMO2)). 2 stretches are compositionally biased toward polar residues: residues 1278–1291 (NSPS…SSIN) and 1299–1312 (KGNS…SSFL). 3 positions are modified to phosphoserine: Ser1279, Ser1281, and Ser1284. Lys1299 participates in a covalent cross-link: Glycyl lysine isopeptide (Lys-Gly) (interchain with G-Cter in SUMO2). Ser1302 is modified (phosphoserine). Lys1324 participates in a covalent cross-link: Glycyl lysine isopeptide (Lys-Gly) (interchain with G-Cter in SUMO2). The residue at position 1328 (Ser1328) is a Phosphoserine. A compositionally biased stretch (polar residues) spans 1333–1346 (PEQQAESTLTSAET). Positions 1349 to 1362 (SKKKKKLRKKKSLR) are enriched in basic residues. Ser1370 is modified (phosphoserine). Thr1372 is modified (phosphothreonine). Glycyl lysine isopeptide (Lys-Gly) (interchain with G-Cter in SUMO2) cross-links involve residues Lys1380, Lys1392, and Lys1395. 2 stretches are compositionally biased toward basic and acidic residues: residues 1402–1416 (EDSR…VRDE) and 1444–1456 (GEEK…KKDI). A Glycyl lysine isopeptide (Lys-Gly) (interchain with G-Cter in SUMO2) cross-link involves residue Lys1454. Residues 1457 to 1481 (WNSTEQNPLETSRSGCDEVSSTSEI) are compositionally biased toward polar residues. Residue Ser1468 is modified to Phosphoserine. Residues Lys1486 and Lys1504 each participate in a glycyl lysine isopeptide (Lys-Gly) (interchain with G-Cter in SUMO2) cross-link. Residues 1502–1513 (SIKGSKNSSEIS) show a composition bias toward polar residues. The disordered stretch occupies residues 1502–1527 (SIKGSKNSSEISSEPGDDDEPTEGSF). WD repeat units follow at residues 1529–1568 (GHQA…GVFE), 1570–1611 (HTSK…CVEQ), 1654–1695 (HGPR…LLRT), 1698–1737 (GHSK…RIYK), 1738–1775 (GHNH…RLQV), and 1778–1815 (GHKD…NYRC). Residue Lys1585 forms a Glycyl lysine isopeptide (Lys-Gly) (interchain with G-Cter in SUMO2) linkage. Residue Lys1737 forms a Glycyl lysine isopeptide (Lys-Gly) (interchain with G-Cter in SUMO2) linkage. The C2H2-type 2; atypical zinc-finger motif lies at 1813–1838 (YRCWWHGCSLIFGVVDHLKQHLLTDH). A Glycyl lysine isopeptide (Lys-Gly) (interchain with G-Cter in SUMO2) cross-link involves residue Lys1864.

In terms of assembly, interacts with KNOP1. Interacts with TARDBP and NUP107. Interacts (via N-terminus) with RBM39. Interacts with the SH3 domains of FYN and GRB2. Phosphorylated by FYN in vitro.

It localises to the nucleus. It is found in the nucleolus. The protein resides in the nucleus speckle. Its function is as follows. RNA-binding protein. Specifically binds to 5'-GGGGCC-3' sequence repeats in RNA. Essential for maintenance of peripheral motor neuron and skeletal muscle function. Required for normal expression and/or alternative splicing of a number of genes in spinal cord and skeletal muscle, including the neurite outgrowth inhibitor RTN4. Also contributes to normal mitochondrial respiratory function in motor neurons, via an unknown mechanism. The protein is Zinc finger protein 106 (ZNF106) of Homo sapiens (Human).